The following is a 631-amino-acid chain: PTS system glucosamine-specific EIICBA component (631 aa).

Residues 3 to 382 (KKAFQILQQL…WNLKTPGRET (380 aa)) enclose the PTS EIIC type-1 domain. A run of 8 helical transmembrane segments spans residues 12 to 32 (LGRALMTPVAVLPAAGLLLRF), 56 to 76 (LIFAVGVAIGLAGGEGVAGLA), 106 to 126 (HLIDMGVFGGIIIGLLAAYLY), 149 to 169 (IITSVSSLVIGVIFSFVWPLI), 196 to 216 (LLIPFGLHHIFYTPFYFMMGE), 243 to 263 (FMMGDFPYMIFCLPAVALAII), 298 to 318 (FLFVAPVLYLINSILAGVIFV), and 350 to 370 (VVIPVGIVFAFIYYYLFRFAI). In terms of domain architecture, PTS EIIB type-1 spans 397–478 (DQLAFHVLQA…KTIMAGGVPA (82 aa)). The active-site Phosphocysteine intermediate; for EIIB activity is C419. Residue C419 is modified to Phosphocysteine. Residues 515-619 (DQVFSEKMMG…SAITPVIFTN (105 aa)) form the PTS EIIA type-1 domain. H567 (tele-phosphohistidine intermediate; for EIIA activity) is an active-site residue. H567 is modified (phosphohistidine).

The protein resides in the cell membrane. It catalyses the reaction D-glucosamine(out) + N(pros)-phospho-L-histidyl-[protein] = D-glucosamine 6-phosphate(in) + L-histidyl-[protein]. Functionally, the phosphoenolpyruvate-dependent sugar phosphotransferase system (sugar PTS), a major carbohydrate active transport system, catalyzes the phosphorylation of incoming sugar substrates concomitantly with their translocation across the cell membrane. This system is involved in glucosamine transport. In vitro, when expressed in the absence of GamR and NagP, can transport N-acetylglucosamine. Its function is as follows. In addition, plays an important role in the phosphorylation of EIIA-deficient PTS transporters. The EIIA domain can transfer a phosphoryl group to EIIA-deficient PTS transporters, enabling growth with maltose, N-acetylglucosamine, sucrose or trehalose as the sole carbon source. This chain is PTS system glucosamine-specific EIICBA component, found in Bacillus subtilis (strain 168).